The sequence spans 285 residues: HTH-type transcriptional regulator MurR (285 aa).

The region spanning 1 to 77 (MLYLTKISNA…MALIGEYSAS (77 aa)) is the HTH rpiR-type domain. The segment at residues 37 to 56 (SRQMAKQLGISQSSIVKFAQ) is a DNA-binding region (H-T-H motif). Residues 128–268 (IIEVISKAPF…FVGLVQLNDV (141 aa)) form the SIS domain.

Homotetramer.

The protein operates within amino-sugar metabolism; N-acetylmuramate degradation [regulation]. Functionally, represses the expression of the murPQ operon involved in the uptake and degradation of N-acetylmuramic acid (MurNAc). Binds to two adjacent inverted repeats within the operator region. MurNAc 6-phosphate, the substrate of MurQ, is the specific inducer that weakens binding of MurR to the operator. This Escherichia coli (strain K12 / MC4100 / BW2952) protein is HTH-type transcriptional regulator MurR.